We begin with the raw amino-acid sequence, 43 residues long: uncharacterized protein (43 aa).

This is an uncharacterized protein from Schizosaccharomyces pombe (strain 972 / ATCC 24843) (Fission yeast).